The primary structure comprises 588 residues: Intracellular maltogenic amylase (588 aa).

Positions 149, 155, 174, and 176 each coordinate Ca(2+). 2 residues coordinate substrate: His249 and Arg325. The active-site Nucleophile is the Asp327. The Proton donor role is filled by Glu356. Residues 422 to 423 (HD), Asp467, and Arg471 contribute to the substrate site.

The protein belongs to the glycosyl hydrolase 13 family. BbmA subfamily. Monomer or homodimer; in equilibrium. Requires Ca(2+) as cofactor.

The protein resides in the cytoplasm. Hydrolyzes beta-cyclodextrin to maltose and glucose, soluble starch to maltose and glucose, and pullulan to panose with trace amounts of maltose and glucose. It is also able to hydrolyze acarbose. Can also exhibit a transglycosylation activity transferring glucose or maltose to another moiety of sugars by forming alpha-(1,6)- and alpha-(1,3)-glycosidic linkages upon the hydrolysis of substrate at concentrations of 5% or higher. The sequence is that of Intracellular maltogenic amylase (bbmA) from Bacillus subtilis.